The primary structure comprises 137 residues: uncharacterized protein (137 aa).

This is an uncharacterized protein from Archaeoglobus fulgidus (strain ATCC 49558 / DSM 4304 / JCM 9628 / NBRC 100126 / VC-16).